The chain runs to 168 residues: Dual-action ribosomal maturation protein DarP (168 aa).

It belongs to the DarP family.

It localises to the cytoplasm. Its function is as follows. Member of a network of 50S ribosomal subunit biogenesis factors which assembles along the 30S-50S interface, preventing incorrect 23S rRNA structures from forming. Promotes peptidyl transferase center (PTC) maturation. In Neisseria meningitidis serogroup B (strain ATCC BAA-335 / MC58), this protein is Dual-action ribosomal maturation protein DarP.